The primary structure comprises 189 residues: dCTP deaminase (189 aa).

DCTP contacts are provided by residues 112–117 (KSTYAR), 136–138 (TLE), Q157, Y171, and Q181. The Proton donor/acceptor role is filled by E138.

This sequence belongs to the dCTP deaminase family. Homotrimer.

The enzyme catalyses dCTP + H2O + H(+) = dUTP + NH4(+). The protein operates within pyrimidine metabolism; dUMP biosynthesis; dUMP from dCTP (dUTP route): step 1/2. Its function is as follows. Catalyzes the deamination of dCTP to dUTP. This is dCTP deaminase from Xanthomonas oryzae pv. oryzae (strain MAFF 311018).